The sequence spans 396 residues: Succinyl-diaminopimelate desuccinylase (396 aa).

Residue histidine 74 participates in Zn(2+) binding. The active site involves aspartate 76. Aspartate 107 contributes to the Zn(2+) binding site. The active-site Proton acceptor is the glutamate 142. 3 residues coordinate Zn(2+): glutamate 143, glutamate 171, and histidine 360.

The protein belongs to the peptidase M20A family. DapE subfamily. In terms of assembly, homodimer. The cofactor is Zn(2+). Requires Co(2+) as cofactor.

It catalyses the reaction N-succinyl-(2S,6S)-2,6-diaminopimelate + H2O = (2S,6S)-2,6-diaminopimelate + succinate. It functions in the pathway amino-acid biosynthesis; L-lysine biosynthesis via DAP pathway; LL-2,6-diaminopimelate from (S)-tetrahydrodipicolinate (succinylase route): step 3/3. Its function is as follows. Catalyzes the hydrolysis of N-succinyl-L,L-diaminopimelic acid (SDAP), forming succinate and LL-2,6-diaminopimelate (DAP), an intermediate involved in the bacterial biosynthesis of lysine and meso-diaminopimelic acid, an essential component of bacterial cell walls. This chain is Succinyl-diaminopimelate desuccinylase, found in Methylobacterium nodulans (strain LMG 21967 / CNCM I-2342 / ORS 2060).